Reading from the N-terminus, the 159-residue chain is Ribosomal RNA large subunit methyltransferase H (159 aa).

S-adenosyl-L-methionine contacts are provided by residues Leu-76, Gly-108, and 127–132 (FSKMTF).

Belongs to the RNA methyltransferase RlmH family. Homodimer.

It is found in the cytoplasm. It carries out the reaction pseudouridine(1915) in 23S rRNA + S-adenosyl-L-methionine = N(3)-methylpseudouridine(1915) in 23S rRNA + S-adenosyl-L-homocysteine + H(+). In terms of biological role, specifically methylates the pseudouridine at position 1915 (m3Psi1915) in 23S rRNA. The polypeptide is Ribosomal RNA large subunit methyltransferase H (Geobacillus thermodenitrificans (strain NG80-2)).